Consider the following 903-residue polypeptide: Glutamate receptor ionotropic, NMDA 1 (903 aa).

Positions 1-20 (MGTMRLFLLAVLFLFSFARA) are cleaved as a signal peptide. Residues 21 to 557 (GCDPKIVNIG…TLDSFMQPFQ (537 aa)) lie on the Extracellular side of the membrane. Residues Asn61, Asn203, Asn276, Asn300, Asn350, Asn368, Asn440, Asn469, and Asn489 are each glycosylated (N-linked (GlcNAc...) asparagine). Cys79 and Cys308 are disulfide-bonded. Intrachain disulfides connect Cys420-Cys452 and Cys436-Cys453. Residues Pro514, Thr516, and Arg521 each contribute to the glycine site. Residues 558 to 578 (STLWLLVGLSVHVVAVMLYLL) form a helical membrane-spanning segment. Topologically, residues 579 to 600 (DRFSPFGRFKVNSEEEEEDALT) are cytoplasmic. Positions 601–620 (LSSAMWFSWGVLLNSGIGEG) are pore-forming. Residues 601–622 (LSSAMWFSWGVLLNSGIGEGAP) constitute an intramembrane region (discontinuously helical). Residues 623–628 (RSFSAR) are Cytoplasmic-facing. The chain crosses the membrane as a helical span at residues 629–645 (ILGMVWAGFAMIIVASY). Over 646–810 (TANLAAFLVL…NAPATLTFEN (165 aa)) the chain is Extracellular. Glycine-binding residues include Ser686 and Asp730. Cys742 and Cys796 form a disulfide bridge. A glycan (N-linked (GlcNAc...) asparagine) is linked at Asn769. The chain crosses the membrane as a helical span at residues 811 to 831 (MAGVFMLVAGGIVAGIFLIFI). At 832–903 (EIAYKRHKDA…SSKDTVNVVV (72 aa)) the chain is on the cytoplasmic side.

This sequence belongs to the glutamate-gated ion channel (TC 1.A.10.1) family. NR1/GRIN1 subfamily. Heterotetramer; the NMDAR subunits are modular and harbor tiered domains that function in concert to regulate opening and closing of the cation-selective ion channel pore. Forms heterotetrameric channels composed of two GluN1/zeta subunits (GRIN1), and two identical GluN2/epsilon subunits (GRIN2A, GRIN2B, GRIN2C or GRIN2D) or GluN3 subunits (GRIN3A or GRIN3B) (in vitro). Does not form functional channels by itself. Can also form heterotetrameric channels that contain at least two GluN1 subunits and at least two different GluN2 subunits (or a combination of one GluN2 and one GluN3 subunits) (in vitro). In vivo, the subunit composition may vary in function of the expression levels of the different subunits.

The protein localises to the cell membrane. The protein resides in the postsynaptic cell membrane. It is found in the postsynaptic density membrane. Its subcellular location is the synaptic cell membrane. The catalysed reaction is Ca(2+)(in) = Ca(2+)(out). It catalyses the reaction Na(+)(in) = Na(+)(out). The enzyme catalyses K(+)(in) = K(+)(out). With respect to regulation, NMDA glutamate receptor activity is modulated by zinc ions. The NMDA glutamate receptor activity of the heterotetramer with grin2b is stimulated by micromolar levels of Zn(2+). The NMDA glutamate receptor activity of the heterotetramer with grin2a is inhibited by nanomolar levels of Zn(2+). Functionally, component of N-methyl-D-aspartate (NMDA) receptors (NMDARs) that function as heterotetrameric, ligand-gated cation channels with high calcium permeability and voltage-dependent block by Mg(2+). NMDARs participate in synaptic plasticity. Channel activation requires binding of the neurotransmitter L-glutamate to the GluN2 subunit, glycine binding to the GluN1 subunit, plus membrane depolarization to eliminate channel inhibition by Mg(2+). NMDARs mediate simultaneously the potasium efflux and the influx of calcium and sodium. Each GluN2 or GluN3 subunit confers differential attributes to channel properties, including activation, deactivation and desensitization kinetics, pH sensitivity, Ca2(+) permeability, and binding to allosteric modulators. In Xenopus laevis (African clawed frog), this protein is Glutamate receptor ionotropic, NMDA 1.